Consider the following 130-residue polypeptide: Small ribosomal subunit protein uS8 (130 aa).

Belongs to the universal ribosomal protein uS8 family.

This chain is Small ribosomal subunit protein uS8 (RPS15A), found in Paracentrotus lividus (Common sea urchin).